The primary structure comprises 699 residues: MEPFCPLLLASFSLSLATAGQGNDTTPTESNWTSTTAGPPDPGTSQPLLTWLLLPLLLLLFLLAAYFFRFRKQRKAVVNSNDKKMPNGILEEQEQQRVMLLSRSPSGPKKYFPIPVEHLEEEIRVRSADDCKRFREEFNSLPSGHIQGTFELANKEENREKNRYPNILPNDHCRVILSQLDGIPCSDYINASYIDGYKEKNKFIAAQGPKQETVNDFWRMVWEQRSATIVMLTNLKERKEEKCYQYWPDQGCWTYGNIRVCVEDCVVLVDYTIRKFCIHPQLPDSCKAPRLVSQLHFTSWPDFGVPFTPIGMLKFLKKVKTLNPSHAGPIVVHCSAGVGRTGTFIVIDAMMDMIHSEQKVDVFEFVSRIRNQRPQMVQTDVQYTFIYQALLEYYLYGDTELDVSSLERHLQTLHGTATHFDKIGLEEEFRKLTNVRIMKENMRTGNLPANMKKARVIQIIPYDFNRVILSMKRGQEFTDYINASFIDGYRQKDYFMATQGPLAHTVEDFWRMVWEWKSHTIVMLTEVQEREQDKCYQYWPTEGSVTHGDITIEIKSDTLSEAISIRDFLVTFKQPLARQEEQVRMVRQFHFHGWPEVGIPTEGKGMIDLIAAVQKQQQQTGNHPITVHCSAGAGRTGTFIALSNILERVKAEGLLDVFQAVKSLRLQRPHMVQTLEQYEFCYKVVQDFIDIFSDYANFK.

A signal peptide spans 1 to 22 (MEPFCPLLLASFSLSLATAGQG). Residues 20-36 (GQGNDTTPTESNWTSTT) show a composition bias toward low complexity. The segment at 20–41 (GQGNDTTPTESNWTSTTAGPPD) is disordered. N-linked (GlcNAc...) asparagine glycosylation is found at N23 and N31. Over 23-47 (NDTTPTESNWTSTTAGPPDPGTSQP) the chain is Extracellular. Residues 48–68 (LLTWLLLPLLLLLFLLAAYFF) form a helical membrane-spanning segment. Over 69 to 699 (RFRKQRKAVV…DIFSDYANFK (631 aa)) the chain is Cytoplasmic. Tyrosine-protein phosphatase domains follow at residues 134-393 (FREE…LLEY) and 425-688 (LEEE…VQDF). Residues D302, 334 to 340 (CSAGVGR), and Q378 contribute to the substrate site. The Phosphocysteine intermediate role is filled by C334. C629 acts as the Phosphocysteine intermediate in catalysis. Y695 bears the Phosphotyrosine mark.

Belongs to the protein-tyrosine phosphatase family. Receptor class 4 subfamily. As to quaternary structure, monomer. Isoform 2: Homodimer. Can form oligomers. Dimerization is increased by oxidative stress and decreased by EGFR. Isoform 2 interacts with GRB2. In terms of processing, a catalytically active cytoplasmic form (p65) is produced by proteolytic cleavage of either isoform 1, isoform 2 or isoform 3. Isoform 1 and isoform 2 are phosphorylated on tyrosine residues by tyrosine kinase Neu. Post-translationally, N-glycosylated. As to expression, isoform 1 is highly expressed in the brain, lung, spleen and testis. Isoform 2 is highly expressed in thymus, spleen and lung. Isoform 1 and isoform 2 are expressed in primary hepatocytes.

Its subcellular location is the cell membrane. The protein resides in the cytoplasm. It carries out the reaction O-phospho-L-tyrosyl-[protein] + H2O = L-tyrosyl-[protein] + phosphate. Its function is as follows. Isoform 1 plays a critical role in signaling transduction pathways and phosphoprotein network topology in red blood cells. May play a role in osteoclast formation and function. Acts as a negative regulator of insulin receptor (IR) signaling and is involved in insulin-induced glucose metabolism mainly through direct dephosphorylation and inactivation of IR in hepatocytes and liver. Isoform 2 acts as a negative regulator of insulin receptor (IR) signaling in skeletal muscle. Regulates insulin-induced tyrosine phosphorylation of insulin receptor (IR) and insulin receptor substrate 1 (IRS-1), phosphorylation of protein kinase B and glycogen synthase kinase-3 and insulin induced stimulation of glucose uptake. In terms of biological role, isoform 1 and isoform 2 act as a negative regulator of FceRI-mediated signal transduction leading to cytokine production and degranulation, most likely by acting at the level of SYK to affect downstream events such as phosphorylation of SLP76 and LAT and mobilization of Ca(2+). This Rattus norvegicus (Rat) protein is Receptor-type tyrosine-protein phosphatase epsilon (Ptpre).